A 2839-amino-acid chain; its full sequence is PDZ domain-containing protein 2 (2839 aa).

Residues 85-182 enclose the PDZ 1 domain; the sequence is LSFGNIPVFG…LIMLRRFKHK (98 aa). Residues 185–318 form a disordered region; the sequence is STYNGNSSNS…RFSKGGKTDF (134 aa). Residues 189–202 are compositionally biased toward low complexity; it reads GNSSNSSEPGETPT. The segment covering 280-296 has biased composition (basic and acidic residues); sequence HLERSEVDRGTEHRIPK. Positions 334 to 419 constitute a PDZ 2 domain; the sequence is KMELLKESDG…MVQLVVASKE (86 aa). Residues 437–447 are compositionally biased toward polar residues; sequence TSSVEDVSSWT. A disordered region spans residues 437–501; the sequence is TSSVEDVSSW…PKQGSNKIKL (65 aa). A compositionally biased stretch (acidic residues) spans 448–461; that stretch reads DNEDQEADGEEDEG. Serine 568 bears the Phosphoserine mark. The PDZ 3 domain occupies 586–672; that stretch reads IIGLYKEKGK…GLFVLTVRTK (87 aa). Positions 678–697 are enriched in polar residues; the sequence is LTPCSTPTHMSRSASPNFNT. A disordered region spans residues 678-723; sequence LTPCSTPTHMSRSASPNFNTSGGASAGGSDEGSSSSLGRKTPGPKD. The PDZ 4 domain maps to 728–813; it reads EVTLNKEPRV…GPVRLVIGRH (86 aa). Polar residues-rich tracts occupy residues 832 to 843 and 894 to 908; these read YQESKEANSSPG and GCST…PSTS. Disordered regions lie at residues 832–852 and 879–921; these read YQES…KSPS and DFMV…ANSL. Phosphoserine occurs at positions 944 and 948. 14 disordered regions span residues 984 to 1033, 1062 to 1155, 1216 to 1493, 1530 to 1620, 1638 to 1712, 1809 to 1865, 1892 to 1976, 2009 to 2079, 2135 to 2166, 2178 to 2211, 2232 to 2251, 2353 to 2383, 2426 to 2481, and 2516 to 2564; these read SLPG…ISAP, SAEA…PCDL, KAAS…GAPA, FHED…LPTQ, PRES…SPLS, NQGT…DLSK, GKAK…SVSD, PDRG…GNIM, QVAE…SMAK, IRKA…GEDH, HFGR…DSQV, AKSG…GSLG, SRQN…SRSK, and ITPR…GEAA. Over residues 1012–1022 the composition is skewed to basic and acidic residues; that stretch reads MDVHNQEERPR. Composition is skewed to polar residues over residues 1092 to 1111, 1138 to 1147, 1221 to 1236, 1250 to 1269, 1305 to 1315, 1384 to 1401, and 1440 to 1453; these read RTDT…QQKS, SGSQTVNLTG, LGQQ…SDLI, SKTS…SQPA, TRSASETSTPH, SVSS…PSTD, and RSPS…GSQE. Low complexity predominate over residues 1662 to 1672; the sequence is SSQPSSLLEMS. Residues 1698–1711 are compositionally biased toward polar residues; sequence EVTSASSAMENSPL. Serine 1850 bears the Phosphoserine mark. Positions 1919 to 1931 are enriched in polar residues; the sequence is SPQTSHKTLSKAV. Residues 1936 to 1945 show a composition bias toward basic and acidic residues; the sequence is HVADHEDPDR. Low complexity predominate over residues 2139-2152; sequence SSTSHPSSLPSHAS. A compositionally biased stretch (low complexity) spans 2370 to 2383; sequence GRRSSGSIVSGSLG. 3 stretches are compositionally biased toward polar residues: residues 2426–2437, 2470–2480, and 2546–2559; these read SRQNPPETSSKG, RHTQPSPVSRS, and PKTS…SASD. The PDZ 5 domain maps to 2622–2706; the sequence is FIVLNRKEGS…HKDALVVIKK (85 aa). The segment at 2709–2729 is disordered; the sequence is DQPRPSARQEPPTANGKGLLS. The 86-residue stretch at 2750 to 2835 folds into the PDZ 6 domain; sequence CVEVLKTSAG…GPVQLLIRKH (86 aa).

As to quaternary structure, interacts with SCN10A, CTNND2 and PKP4. Post-translationally, a secreted form is produced by caspase-mediated proteolytic cleavage. Isoform 2 is expressed (at protein level) in prostate and many prostate tumors.

The protein resides in the nucleus. It is found in the cytoplasm. The protein localises to the endoplasmic reticulum. It localises to the secreted. This chain is PDZ domain-containing protein 2 (PDZD2), found in Homo sapiens (Human).